The sequence spans 276 residues: Type III pantothenate kinase (276 aa).

18–25 contacts ATP; that stretch reads EIGNSRLH. Substrate is bound by residues Tyr116 and 120-123; that span reads GIDR. The active-site Proton acceptor is Asp122. K(+) is bound at residue Asp142. Thr145 contributes to the ATP binding site. Thr200 is a binding site for substrate.

The protein belongs to the type III pantothenate kinase family. Homodimer. Requires NH4(+) as cofactor. It depends on K(+) as a cofactor.

The protein localises to the cytoplasm. It catalyses the reaction (R)-pantothenate + ATP = (R)-4'-phosphopantothenate + ADP + H(+). Its pathway is cofactor biosynthesis; coenzyme A biosynthesis; CoA from (R)-pantothenate: step 1/5. Catalyzes the phosphorylation of pantothenate (Pan), the first step in CoA biosynthesis. This is Type III pantothenate kinase from Nostoc sp. (strain PCC 7120 / SAG 25.82 / UTEX 2576).